The sequence spans 47 residues: Sperm protamine P1 (47 aa).

Belongs to the protamine P1 family. Testis.

The protein resides in the nucleus. It localises to the chromosome. Protamines substitute for histones in the chromatin of sperm during the haploid phase of spermatogenesis. They compact sperm DNA into a highly condensed, stable and inactive complex. In Myotis daubentonii (Daubenton's bat), this protein is Sperm protamine P1 (PRM1).